Here is a 131-residue protein sequence, read N- to C-terminus: Cell cycle protein GpsB (131 aa).

The stretch at 39 to 76 forms a coiled coil; it reads LDGIIRDYEAFTNEIDRLKEENTKLFSRVDELTKQLSV. The segment at 111-131 is disordered; sequence KLSDSSVDNHDDGNHSDVDQY. The segment covering 117-131 has biased composition (basic and acidic residues); that stretch reads VDNHDDGNHSDVDQY.

It belongs to the GpsB family. In terms of assembly, forms polymers through the coiled coil domains. Interacts with PBP1, MreC and EzrA.

It localises to the cytoplasm. Its function is as follows. Divisome component that associates with the complex late in its assembly, after the Z-ring is formed, and is dependent on DivIC and PBP2B for its recruitment to the divisome. Together with EzrA, is a key component of the system that regulates PBP1 localization during cell cycle progression. Its main role could be the removal of PBP1 from the cell pole after pole maturation is completed. Also contributes to the recruitment of PBP1 to the division complex. Not essential for septum formation. The polypeptide is Cell cycle protein GpsB (Lacticaseibacillus casei (strain BL23) (Lactobacillus casei)).